The sequence spans 211 residues: Endo-1,4-beta-xylanase A (211 aa).

Residues methionine 1 to arginine 27 form the signal peptide. In terms of domain architecture, GH11 spans serine 28–serine 210. Glutamate 106 acts as the Nucleophile in catalysis. Residues cysteine 119 and cysteine 138 are joined by a disulfide bond. The Proton donor role is filled by glutamate 197.

It belongs to the glycosyl hydrolase 11 (cellulase G) family.

The protein resides in the secreted. The catalysed reaction is Endohydrolysis of (1-&gt;4)-beta-D-xylosidic linkages in xylans.. Its pathway is glycan degradation; xylan degradation. Endo-1,4-beta-xylanase involved in the hydrolysis of xylan, a major structural heterogeneous polysaccharide found in plant biomass representing the second most abundant polysaccharide in the biosphere, after cellulose. The sequence is that of Endo-1,4-beta-xylanase A (xynA) from Aspergillus niger.